The chain runs to 137 residues: MLSPKRTKFRKMQKGNNRGLAMTGSDVSFGDFALQCVEPARVTSRQIEAARMAIQRHVKRAGKLWIRIFPDRPVTKKPLEVRMGGGKGAPEEWCALVQPGRVMYEISGVSEETAKEAFRLASHKLPMQCKFLARGLT.

The protein belongs to the universal ribosomal protein uL16 family. Part of the 50S ribosomal subunit.

Its function is as follows. Binds 23S rRNA and is also seen to make contacts with the A and possibly P site tRNAs. This is Large ribosomal subunit protein uL16 from Sorangium cellulosum (strain So ce56) (Polyangium cellulosum (strain So ce56)).